The primary structure comprises 566 residues: Rho GTPase-activating protein gacH (566 aa).

Disordered stretches follow at residues 1-56, 65-84, 128-168, and 322-366; these read MSGV…SGAT, LLKQQQQPNHSITTNNNNNK, SEDE…SAHS, and KPQV…NSKN. Low complexity predominate over residues 14 to 35; that stretch reads SSTTATTTGSSKSSLNISKSVS. The span at 36 to 56 shows a compositional bias: polar residues; it reads PTGNKAVSPMSSPNSLQSGAT. A compositionally biased stretch (low complexity) spans 65–83; the sequence is LLKQQQQPNHSITTNNNNN. Positions 130-141 are enriched in acidic residues; that stretch reads DEYEDDEDEDEN. Over residues 142–160 the composition is skewed to low complexity; it reads NNSVNNNSNNNSNNNNNNN. Residues 327 to 337 show a composition bias toward polar residues; sequence KSPQSSGSLST. A compositionally biased stretch (low complexity) spans 345-356; it reads SSSLQRSRSVSQ. One can recognise a Rho-GAP domain in the interval 369–564; the sequence is GSLDTILEKE…LLIENYNLFY (196 aa).

It is found in the cytoplasm. In terms of biological role, rho GTPase-activating protein involved in the signal transduction pathway. The polypeptide is Rho GTPase-activating protein gacH (gacH) (Dictyostelium discoideum (Social amoeba)).